Here is a 1076-residue protein sequence, read N- to C-terminus: Isoleucine--tRNA ligase (1076 aa).

The short motif at P47–T57 is the 'HIGH' region element. Positions K591–S595 match the 'KMSKS' region motif. K594 contacts ATP.

Belongs to the class-I aminoacyl-tRNA synthetase family. IleS type 2 subfamily. As to quaternary structure, monomer. Zn(2+) serves as cofactor.

The protein resides in the cytoplasm. The catalysed reaction is tRNA(Ile) + L-isoleucine + ATP = L-isoleucyl-tRNA(Ile) + AMP + diphosphate. Catalyzes the attachment of isoleucine to tRNA(Ile). As IleRS can inadvertently accommodate and process structurally similar amino acids such as valine, to avoid such errors it has two additional distinct tRNA(Ile)-dependent editing activities. One activity is designated as 'pretransfer' editing and involves the hydrolysis of activated Val-AMP. The other activity is designated 'posttransfer' editing and involves deacylation of mischarged Val-tRNA(Ile). This chain is Isoleucine--tRNA ligase, found in Methanoregula boonei (strain DSM 21154 / JCM 14090 / 6A8).